The following is a 732-amino-acid chain: Sesterbrasiliatriene synthase PbSS (732 aa).

The segment at 1–342 (MDFLSGAFHY…SRYHRDDLIT (342 aa)) is terpene cyclase. Mg(2+)-binding residues include Asp105 and Asp109. Substrate is bound by residues Asp105, Asp109, 193–196 (RLSE), 242–246 (FNKEF), and 334–335 (RY). The short motif at 105-109 (DDVTD) is the DDXXD 1 element. Positions 238–246 (DYYSFNKEF) match the NSE/DTE motif. Residues 343-732 (TAGDRAMIVG…ARILLLGLGL (390 aa)) are prenyltransferase. Disordered regions lie at residues 371–390 (KSAT…WSDS) and 398–420 (ACYT…HKAN). Basic and acidic residues predominate over residues 411 to 420 (NGTEAGHKAN). 3 residues coordinate isopentenyl diphosphate: Lys453, Arg456, and His485. Mg(2+)-binding residues include Asp492 and Asp496. The short motif at 492–496 (DDIED) is the DDXXD 2 element. Residue Arg501 participates in dimethylallyl diphosphate binding. Arg502 serves as a coordination point for isopentenyl diphosphate. 6 residues coordinate dimethylallyl diphosphate: Lys579, Thr580, Gln615, Asn622, Lys632, and Lys642.

In the N-terminal section; belongs to the terpene synthase family. This sequence in the C-terminal section; belongs to the FPP/GGPP synthase family. In terms of assembly, hexamer. The cofactor is Mg(2+).

It catalyses the reaction isopentenyl diphosphate + (2E,6E)-farnesyl diphosphate = (2E,6E,10E)-geranylgeranyl diphosphate + diphosphate. The catalysed reaction is isopentenyl diphosphate + (2E,6E,10E)-geranylgeranyl diphosphate = (2E,6E,10E,14E)-geranylfarnesyl diphosphate + diphosphate. It participates in secondary metabolite biosynthesis; terpenoid biosynthesis. Bifunctional sesterterpene synthase that possesses both prenyl transferase and terpene cyclase activity, converting isopentenyl diphosphate and dimethylallyl diphosphate into geranylfarnesyl diphosphate (GFPP) and further converting GFPP into sesterbrasiliatriene. This is Sesterbrasiliatriene synthase PbSS (PbSS) from Penicillium brasilianum.